Here is a 593-residue protein sequence, read N- to C-terminus: Tectonic-1 (593 aa).

An N-terminal signal peptide occupies residues 1 to 22 (MGSRGLPPLLLVLLNCYTSSST). Positions 37-72 (KEDLNSTKATPTTLQPSLSPRTPGTPRAPERSGPRP) are disordered. An N-linked (GlcNAc...) asparagine glycan is attached at Asn41. The span at 42–58 (STKATPTTLQPSLSPRT) shows a compositional bias: polar residues. An N-linked (GlcNAc...) asparagine glycan is attached at Asn303. Arg486 is modified (omega-N-methylarginine). A glycan (N-linked (GlcNAc...) asparagine) is linked at Asn536.

The protein belongs to the tectonic family. As to quaternary structure, part of the tectonic-like complex (also named B9 complex).

The protein localises to the cytoplasm. It is found in the cytoskeleton. The protein resides in the cilium basal body. It localises to the secreted. In terms of biological role, component of the tectonic-like complex, a complex localized at the transition zone of primary cilia and acting as a barrier that prevents diffusion of transmembrane proteins between the cilia and plasma membranes. Regulator of Hedgehog (Hh), required for both activation and inhibition of the Hh pathway in the patterning of the neural tube. During neural tube development, it is required for formation of the most ventral cell types and for full Hh pathway activation. Functions in Hh signal transduction to fully activate the pathway in the presence of high Hh levels and to repress the pathway in the absence of Hh signals. Modulates Hh signal transduction downstream of SMO and RAB23. This chain is Tectonic-1 (Tctn1), found in Mus musculus (Mouse).